The chain runs to 745 residues: MLHELLLALLGFTGDLIVDEREQRKTLGLAFNSDSPLSDECTFKLAPDISFIEPSERDLIERLIKLGFYYRELDRFAKKSRNLSWIRSVTSVHPLERADELSKQSREKKPSVYRRAIANGIGEILSVYRSAVLHIEQKLLAETTPILATVTEGLNKFFVLFPPLYEVILEIERDDIRGGQLLNVLNKRCHCGVPELRTCLQRLLWNGHQVMYNQLAAWMVYGILQDPHGEFFIKRQDDGDLDHRSSQEEVSEKLARTSVHETSLTDWHSGFHISLDMLPDYIPMRLGESILFAGKAIRVLRNPSPAFQFQKDKSFQQTMRGSQRIRGFMHSDFPETETELDADLTGGELLPQSEADKIEAMLKDLKESSEFHKRSFECTVDSVRAIAASHLWQLVVVRADLNGHLKALKDYFLLEKGDFFQCFLEESRQLMRLPPRQSTGESDLMVPFQLAATKTIAEEDKYFSRVSLRMPSFGVTVRSSQADMVRSKVSLTGKANLTSDTSVDGWDAIALEYSVDWPMQLFFTQEVLSKYLKVFQYLIRLKRTQMELEKSWASVMHQDHIESAQHRKDGLNGSTSQQRRQGIRPMWRVREHMAFLIRNLQFYIQVDVIESQWKVLQTHIHDSQDFTELVGFHQEYLSALISQSFLDIGSVSRILDSIMKLCLQFCWNIENQESNPNTSELENIAEEFNKKSNSLYTILRSSKLAGSQRAPFLRRFLLRLNFNSFYEATARGVLNVVRQRPALPL.

The protein belongs to the TUBGCP family. Gamma-tubulin complex is composed of gamma-tubulin and GCP proteins.

The protein localises to the cytoplasm. The protein resides in the cytoskeleton. It localises to the microtubule organizing center. Its subcellular location is the spindle. Functionally, gamma-tubulin complex is necessary for microtubule nucleation at the microtubule organizing centers (MTOCs). In terms of biological role, gamma-tubulin complex is essential for the control of microtubular network remodeling in the course of initiation and development of giant-feeding cells, and for the successful reproduction of nematodes (e.g. Meloidogyne spp.) in their plant hosts. In Arabidopsis thaliana (Mouse-ear cress), this protein is Gamma-tubulin complex component 4 (GCP4).